Here is a 420-residue protein sequence, read N- to C-terminus: Serine hydroxymethyltransferase (420 aa).

(6S)-5,6,7,8-tetrahydrofolate is bound by residues L121 and 125-127; that span reads GHL. N6-(pyridoxal phosphate)lysine is present on K229. 355–357 serves as a coordination point for (6S)-5,6,7,8-tetrahydrofolate; sequence SPF.

It belongs to the SHMT family. As to quaternary structure, homodimer. It depends on pyridoxal 5'-phosphate as a cofactor.

The protein resides in the cytoplasm. It catalyses the reaction (6R)-5,10-methylene-5,6,7,8-tetrahydrofolate + glycine + H2O = (6S)-5,6,7,8-tetrahydrofolate + L-serine. Its pathway is one-carbon metabolism; tetrahydrofolate interconversion. It functions in the pathway amino-acid biosynthesis; glycine biosynthesis; glycine from L-serine: step 1/1. In terms of biological role, catalyzes the reversible interconversion of serine and glycine with tetrahydrofolate (THF) serving as the one-carbon carrier. This reaction serves as the major source of one-carbon groups required for the biosynthesis of purines, thymidylate, methionine, and other important biomolecules. Also exhibits THF-independent aldolase activity toward beta-hydroxyamino acids, producing glycine and aldehydes, via a retro-aldol mechanism. This is Serine hydroxymethyltransferase from Chromohalobacter salexigens (strain ATCC BAA-138 / DSM 3043 / CIP 106854 / NCIMB 13768 / 1H11).